We begin with the raw amino-acid sequence, 643 residues long: Ecto-NOX disulfide-thiol exchanger 1 (643 aa).

The 80-residue stretch at 142–221 folds into the RRM domain; it reads KTVFVGGLPE…GRLHVDFAQA (80 aa). 2 coiled-coil regions span residues 307 to 342 and 425 to 521; these read VQSA…LTGI and QAYA…QLKG.

It belongs to the ENOX family. Cu cation is required as a cofactor.

It is found in the cell membrane. Its subcellular location is the secreted. The protein resides in the extracellular space. With respect to regulation, not inhibited by the antitumor sulfonylurea LY181984, the vabilloid capsaicin, and retinoids. Functionally, probably acts as a terminal oxidase of plasma electron transport from cytosolic NAD(P)H via hydroquinones to acceptors at the cell surface. Hydroquinone oxidase activity alternates with a protein disulfide-thiol interchange/oxidoreductase activity which may control physical membrane displacements associated with vesicle budding or cell enlargement. The activities oscillate with a period length of 24 minutes and play a role in control of the ultradian cellular biological clock. This is Ecto-NOX disulfide-thiol exchanger 1 (Enox1) from Mus musculus (Mouse).